The following is a 454-amino-acid chain: Pup--protein ligase (454 aa).

Residue Glu-9 coordinates Mg(2+). Arg-53 serves as a coordination point for ATP. Position 55 (Tyr-55) interacts with Mg(2+). The active-site Proton acceptor is Asp-57. Position 63 (Glu-63) interacts with Mg(2+). 2 residues coordinate ATP: Thr-66 and Trp-420.

It belongs to the Pup ligase/Pup deamidase family. Pup-conjugating enzyme subfamily.

The catalysed reaction is ATP + [prokaryotic ubiquitin-like protein]-L-glutamate + [protein]-L-lysine = ADP + phosphate + N(6)-([prokaryotic ubiquitin-like protein]-gamma-L-glutamyl)-[protein]-L-lysine.. Its pathway is protein degradation; proteasomal Pup-dependent pathway. It functions in the pathway protein modification; protein pupylation. Its function is as follows. Catalyzes the covalent attachment of the prokaryotic ubiquitin-like protein modifier Pup to the proteasomal substrate proteins, thereby targeting them for proteasomal degradation. This tagging system is termed pupylation. The ligation reaction involves the side-chain carboxylate of the C-terminal glutamate of Pup and the side-chain amino group of a substrate lysine. The chain is Pup--protein ligase from Arthrobacter sp. (strain FB24).